Reading from the N-terminus, the 514-residue chain is Peptide chain release factor 3 (514 aa).

Residues 8–268 (KKRRTFAIIS…TFLKFAPEPH (261 aa)) enclose the tr-type G domain. Residues 17–24 (SHPDAGKT), 85–89 (DTPGH), and 139–142 (NKLD) each bind GTP.

Belongs to the TRAFAC class translation factor GTPase superfamily. Classic translation factor GTPase family. PrfC subfamily.

It is found in the cytoplasm. In terms of biological role, increases the formation of ribosomal termination complexes and stimulates activities of RF-1 and RF-2. It binds guanine nucleotides and has strong preference for UGA stop codons. It may interact directly with the ribosome. The stimulation of RF-1 and RF-2 is significantly reduced by GTP and GDP, but not by GMP. The polypeptide is Peptide chain release factor 3 (Streptococcus pneumoniae serotype 19F (strain G54)).